The following is a 355-amino-acid chain: Zinc finger A20 and AN1 domain-containing stress-associated protein 3 (355 aa).

The A20-type zinc-finger motif lies at alanine 199–glycine 233. Cysteine 205, cysteine 209, cysteine 221, cysteine 224, cysteine 295, cysteine 298, cysteine 309, cysteine 311, cysteine 316, histidine 319, histidine 325, and cysteine 327 together coordinate Zn(2+). The AN1-type zinc finger occupies lysine 289–serine 335.

Its function is as follows. May be involved in environmental stress response. This chain is Zinc finger A20 and AN1 domain-containing stress-associated protein 3 (SAP3), found in Oryza sativa subsp. japonica (Rice).